The primary structure comprises 227 residues: MAYPFQLGLQDATSPIMEELLHFHDHTLMIVFLISSLVLYIISLMLTTKLTHTSTMDAQEVETVWTILPAIILILIALPSLRILYMMDEINNPSLTVKTMGHQWYWSYEYTDYEDLNFDSYMIPTQELKPGELRLLEVDNRVVLPMEMTVRMLISSEDVLHSWAVPSLGLKTDAIPGRLNQTTLMAMRPGLYYGQCSEICGSNHSFMPIVLEMVPLSYFETWSALMV.

Over 1-14 the chain is Mitochondrial intermembrane; that stretch reads MAYPFQLGLQDATS. A helical transmembrane segment spans residues 15–45; it reads PIMEELLHFHDHTLMIVFLISSLVLYIISLM. Residues 46–59 lie on the Mitochondrial matrix side of the membrane; the sequence is LTTKLTHTSTMDAQ. A helical transmembrane segment spans residues 60–87; sequence EVETVWTILPAIILILIALPSLRILYMM. The Mitochondrial intermembrane segment spans residues 88–227; sequence DEINNPSLTV…YFETWSALMV (140 aa). Cu cation contacts are provided by H161, C196, E198, C200, H204, and M207. E198 is a binding site for Mg(2+). Y218 carries the post-translational modification Phosphotyrosine.

This sequence belongs to the cytochrome c oxidase subunit 2 family. In terms of assembly, component of the cytochrome c oxidase (complex IV, CIV), a multisubunit enzyme composed of 14 subunits. The complex is composed of a catalytic core of 3 subunits MT-CO1, MT-CO2 and MT-CO3, encoded in the mitochondrial DNA, and 11 supernumerary subunits COX4I, COX5A, COX5B, COX6A, COX6B, COX6C, COX7A, COX7B, COX7C, COX8 and NDUFA4, which are encoded in the nuclear genome. The complex exists as a monomer or a dimer and forms supercomplexes (SCs) in the inner mitochondrial membrane with NADH-ubiquinone oxidoreductase (complex I, CI) and ubiquinol-cytochrome c oxidoreductase (cytochrome b-c1 complex, complex III, CIII), resulting in different assemblies (supercomplex SCI(1)III(2)IV(1) and megacomplex MCI(2)III(2)IV(2)). Found in a complex with TMEM177, COA6, COX18, COX20, SCO1 and SCO2. Interacts with TMEM177 in a COX20-dependent manner. Interacts with COX20. Interacts with COX16. Requires Cu cation as cofactor.

Its subcellular location is the mitochondrion inner membrane. It carries out the reaction 4 Fe(II)-[cytochrome c] + O2 + 8 H(+)(in) = 4 Fe(III)-[cytochrome c] + 2 H2O + 4 H(+)(out). Component of the cytochrome c oxidase, the last enzyme in the mitochondrial electron transport chain which drives oxidative phosphorylation. The respiratory chain contains 3 multisubunit complexes succinate dehydrogenase (complex II, CII), ubiquinol-cytochrome c oxidoreductase (cytochrome b-c1 complex, complex III, CIII) and cytochrome c oxidase (complex IV, CIV), that cooperate to transfer electrons derived from NADH and succinate to molecular oxygen, creating an electrochemical gradient over the inner membrane that drives transmembrane transport and the ATP synthase. Cytochrome c oxidase is the component of the respiratory chain that catalyzes the reduction of oxygen to water. Electrons originating from reduced cytochrome c in the intermembrane space (IMS) are transferred via the dinuclear copper A center (CU(A)) of subunit 2 and heme A of subunit 1 to the active site in subunit 1, a binuclear center (BNC) formed by heme A3 and copper B (CU(B)). The BNC reduces molecular oxygen to 2 water molecules using 4 electrons from cytochrome c in the IMS and 4 protons from the mitochondrial matrix. This chain is Cytochrome c oxidase subunit 2 (MT-CO2), found in Urocyon cinereoargenteus (Gray fox).